The sequence spans 426 residues: Coiled-coil domain-containing protein 86 (426 aa).

Positions 1–426 are disordered; the sequence is MDTPLRRSRR…QPPQRPVAKV (426 aa). Position 18 is a phosphoserine (S18). A compositionally biased stretch (basic and acidic residues) spans 33–49; sequence ALVDFKSNSEETGELKS. Residues 55 to 145 are compositionally biased toward pro residues; it reads LSLPSPGPQP…SLPSPGPQPE (91 aa). S59 is subject to Phosphoserine. Position 66 is a phosphothreonine (T66). A phosphoserine mark is found at S67, S70, S161, S172, S183, S191, S194, S225, S252, S253, and S283. Residues 241–255 show a composition bias toward polar residues; that stretch reads QPAQELTVQAPSSPE. Positions 304–320 are enriched in basic residues; it reads GKPKSGRVWKDRSKKRF. Over residues 339-383 the composition is skewed to basic and acidic residues; sequence ERQERKLAKDFARHLEEEKQRRRQEKKERRAENLRRRLENERKAE. The stretch at 346-389 forms a coiled coil; the sequence is AKDFARHLEEEKQRRRQEKKERRAENLRRRLENERKAEIVQVIR. Over residues 392–402 the composition is skewed to basic residues; the sequence is AKLKKAKKKQL. The residue at position 408 (R408) is a Citrulline.

In terms of processing, citrullinated by PADI4. Highly expressed in testis. Also expressed in heart, liver, kidney.

The protein resides in the nucleus. It is found in the chromosome. The protein localises to the nucleolus. Required for proper chromosome segregation during mitosis and error-free mitotic progression. This Mus musculus (Mouse) protein is Coiled-coil domain-containing protein 86.